The chain runs to 278 residues: MGEWAFLGSLLDAVQLQSPLVGRLWLVIMLIFRILVLATVGGAVFEDEQEEFVCNTLQPGCRQTCYDRAFPVSHYRFWLFHILLLSAPPVLFVIYSMHQASKEAGGAQLAPPCARGRAEAPCSPCALRARRARRCYLLSVALRLLAELAFLGGQALLYGFRVDPHYACAGPPCPHTVDCFVSRPTEKTVFVVFYFAVGLLSALLSVAELGHLLWKGRQRAKLLPPPPPSPSLPSQRGDPDPFGPPAYAHRSPAGDSEGEGGSGHSKASLATVRQDLAI.

The Cytoplasmic portion of the chain corresponds to 1–24 (MGEWAFLGSLLDAVQLQSPLVGRL). Residues 25–45 (WLVIMLIFRILVLATVGGAVF) form a helical membrane-spanning segment. The Extracellular portion of the chain corresponds to 46–76 (EDEQEEFVCNTLQPGCRQTCYDRAFPVSHYR). A helical transmembrane segment spans residues 77 to 97 (FWLFHILLLSAPPVLFVIYSM). Residues 98–136 (HQASKEAGGAQLAPPCARGRAEAPCSPCALRARRARRCY) lie on the Cytoplasmic side of the membrane. Residues 137–157 (LLSVALRLLAELAFLGGQALL) traverse the membrane as a helical segment. Residues 158–188 (YGFRVDPHYACAGPPCPHTVDCFVSRPTEKT) lie on the Extracellular side of the membrane. The chain crosses the membrane as a helical span at residues 189–209 (VFVVFYFAVGLLSALLSVAEL). At 210 to 278 (GHLLWKGRQR…LATVRQDLAI (69 aa)) the chain is on the cytoplasmic side. A disordered region spans residues 223-278 (LPPPPPSPSLPSQRGDPDPFGPPAYAHRSPAGDSEGEGGSGHSKASLATVRQDLAI).

It belongs to the connexin family. Delta-type subfamily. A connexon is composed of a hexamer of connexins.

It is found in the cell membrane. It localises to the cell junction. The protein resides in the gap junction. In terms of biological role, one gap junction consists of a cluster of closely packed pairs of transmembrane channels, the connexons, through which materials of low MW diffuse from one cell to a neighboring cell. This is Gap junction delta-3 protein (Gjd3) from Mus musculus (Mouse).